Here is a 582-residue protein sequence, read N- to C-terminus: La-related protein 7 (582 aa).

Met1 is modified (N-acetylmethionine). The disordered stretch occupies residues Met1–Lys27. Basic and acidic residues predominate over residues Lys10 to Lys25. An HTH La-type RNA-binding domain is found at Arg28 to Glu122. Residues Arg125–Thr203 form the RRM domain. Disordered stretches follow at residues Asn188–Lys368 and Lys410–Glu442. Positions Lys219 to Met228 are enriched in basic residues. Basic and acidic residues predominate over residues Lys229–Asn240. Lys237 participates in a covalent cross-link: Glycyl lysine isopeptide (Lys-Gly) (interchain with G-Cter in SUMO2). The residue at position 257 (Thr257) is a Phosphothreonine. A phosphoserine mark is found at Ser258, Ser261, Ser273, Ser298, Ser299, and Ser300. The span at Ile316 to Glu335 shows a compositional bias: basic and acidic residues. Ser337 carries the phosphoserine modification. Phosphothreonine is present on Thr338. Ser351 is modified (phosphoserine). Positions Lys354–His367 are enriched in basic residues. A Glycyl lysine isopeptide (Lys-Gly) (interchain with G-Cter in SUMO2) cross-link involves residue Lys410. A compositionally biased stretch (basic and acidic residues) spans Lys428–Glu442. Residues Gln450–Lys563 enclose the xRRM domain.

This sequence belongs to the LARP7 family. As to quaternary structure, core component of the 7SK RNP complex, at least composed of 7SK RNA, LARP7, MEPCE, HEXIM1 (or HEXIM2) and P-TEFb (composed of CDK9 and CCNT1/cyclin-T1). Interacts with METTL16. Interacts with RBM7; upon genotoxic stress this interaction is enhanced, triggering the release of inactive P-TEFb complex from the core, yielding to P-TEFb complex activation. Associates with box C/D small nucleolar ribonucleoprotein (snoRNP) complexes.

The protein localises to the nucleus. The protein resides in the nucleoplasm. Its function is as follows. RNA-binding protein that specifically binds distinct small nuclear RNA (snRNAs) and regulates their processing and function. Specifically binds the 7SK snRNA (7SK RNA) and acts as a core component of the 7SK ribonucleoprotein (RNP) complex, thereby acting as a negative regulator of transcription elongation by RNA polymerase II. The 7SK RNP complex sequesters the positive transcription elongation factor b (P-TEFb) in a large inactive 7SK RNP complex preventing RNA polymerase II phosphorylation and subsequent transcriptional elongation. The 7SK RNP complex also promotes snRNA gene transcription by RNA polymerase II via interaction with the little elongation complex (LEC). LARP7 specifically binds to the highly conserved 3'-terminal U-rich stretch of 7SK RNA; on stimulation, remains associated with 7SK RNA, whereas P-TEFb is released from the complex. LARP7 also acts as a regulator of mRNA splicing fidelity by promoting U6 snRNA processing. Specifically binds U6 snRNAs and associates with a subset of box C/D RNP complexes: promotes U6 snRNA 2'-O-methylation by facilitating U6 snRNA loading into box C/D RNP complexes. U6 snRNA 2'-O-methylation is required for mRNA splicing fidelity. Binds U6 snRNAs with a 5'-CAGGG-3' sequence motif. U6 snRNA processing is required for spermatogenesis. In Homo sapiens (Human), this protein is La-related protein 7.